Reading from the N-terminus, the 273-residue chain is Bis(5'-nucleosyl)-tetraphosphatase, symmetrical (273 aa).

It belongs to the Ap4A hydrolase family.

The enzyme catalyses P(1),P(4)-bis(5'-adenosyl) tetraphosphate + H2O = 2 ADP + 2 H(+). In terms of biological role, hydrolyzes diadenosine 5',5'''-P1,P4-tetraphosphate to yield ADP. The chain is Bis(5'-nucleosyl)-tetraphosphatase, symmetrical from Aliivibrio salmonicida (strain LFI1238) (Vibrio salmonicida (strain LFI1238)).